Reading from the N-terminus, the 697-residue chain is Elongation factor G (697 aa).

The tr-type G domain occupies 10 to 285; sequence ERTRNIGIMA…AVVDYLPSPL (276 aa). GTP is bound by residues 19-26, 83-87, and 137-140; these read AHIDAGKT, DTPGH, and NKMD.

This sequence belongs to the TRAFAC class translation factor GTPase superfamily. Classic translation factor GTPase family. EF-G/EF-2 subfamily.

Its subcellular location is the cytoplasm. In terms of biological role, catalyzes the GTP-dependent ribosomal translocation step during translation elongation. During this step, the ribosome changes from the pre-translocational (PRE) to the post-translocational (POST) state as the newly formed A-site-bound peptidyl-tRNA and P-site-bound deacylated tRNA move to the P and E sites, respectively. Catalyzes the coordinated movement of the two tRNA molecules, the mRNA and conformational changes in the ribosome. The sequence is that of Elongation factor G from Pediococcus pentosaceus (strain ATCC 25745 / CCUG 21536 / LMG 10740 / 183-1w).